The primary structure comprises 299 residues: MSAPPENLMTESRNPASSHIDTLSTLEMLKVMNAEDKKVALAVELALPSITQAVDLISAAFHKKGRLIYCGAGTSGRLGILDASECPPTFGTPAKQVMALIAGGHRAILKAVENAEDNLQAGQSDLQNINFNENDILVGIAASGSTPYVIGAMRYAKSINAQVIAINCNPNSLMSKECDVNICAVVGPEVLTGSSRLKAGTAQKLILNMLTTGAMIRTGKVFGNLMVDVQATNAKLVERQKMIVIAATDCLREEAEKALLQCNGHCKTAIVMILTNTNTAQAKSLLAKNNGYIRQSIVK.

Positions 57-220 (ISAAFHKKGR…TTGAMIRTGK (164 aa)) constitute an SIS domain. Catalysis depends on Glu-85, which acts as the Proton donor. Residue Glu-116 is part of the active site.

The protein belongs to the GCKR-like family. MurNAc-6-P etherase subfamily. Homodimer.

The catalysed reaction is N-acetyl-D-muramate 6-phosphate + H2O = N-acetyl-D-glucosamine 6-phosphate + (R)-lactate. Its pathway is amino-sugar metabolism; 1,6-anhydro-N-acetylmuramate degradation. The protein operates within amino-sugar metabolism; N-acetylmuramate degradation. It functions in the pathway cell wall biogenesis; peptidoglycan recycling. Its function is as follows. Specifically catalyzes the cleavage of the D-lactyl ether substituent of MurNAc 6-phosphate, producing GlcNAc 6-phosphate and D-lactate. Together with AnmK, is also required for the utilization of anhydro-N-acetylmuramic acid (anhMurNAc) either imported from the medium or derived from its own cell wall murein, and thus plays a role in cell wall recycling. The chain is N-acetylmuramic acid 6-phosphate etherase from Psychromonas ingrahamii (strain DSM 17664 / CCUG 51855 / 37).